A 750-amino-acid chain; its full sequence is E3 ubiquitin-protein ligase rfwd3.S (750 aa).

Positions 92-206 (RQAAEQRSSV…GAAPPAEPAP (115 aa)) are disordered. Residues 105–116 (RVQRRSTRRHQR) are compositionally biased toward basic residues. Positions 122–144 (TAGTSSRAALSNFFQINRTQGVA) are enriched in polar residues. Residues 168–181 (SSDETVELSEEEEG) are compositionally biased toward acidic residues. The RING-type; degenerate zinc finger occupies 263–307 (CAICFEPWTNAGQHRLSALRCGHLFGFTCIERWLKGGAAKCPQCN). Low complexity predominate over residues 387 to 405 (TSMQASSSRSTISGSLSSS). The segment at 387-406 (TSMQASSSRSTISGSLSSSQ) is disordered. 3 WD repeats span residues 470-510 (IHSK…VVQT), 512-552 (NTGR…NCVQ), and 558-603 (GSRC…YRPH).

[4Fe-4S] cluster serves as cofactor.

It is found in the nucleus. The protein localises to the PML body. It localises to the cytoplasm. It carries out the reaction S-ubiquitinyl-[E2 ubiquitin-conjugating enzyme]-L-cysteine + [acceptor protein]-L-lysine = [E2 ubiquitin-conjugating enzyme]-L-cysteine + N(6)-ubiquitinyl-[acceptor protein]-L-lysine.. It functions in the pathway protein modification; protein ubiquitination. Functionally, E3 ubiquitin-protein ligase required for the repair of DNA interstrand cross-links (ICL) in response to DNA damage. Plays a key role in RPA-mediated DNA damage signaling and repair. Required to translesion DNA synthesis across DNA-protein cross-link adducts by catalyzing ubiquitination of proteins on single-stranded DNA (ssDNA). Mediates ubiquitination of the hmces DNA-protein cross-link, possibly promoting its degradation. The polypeptide is E3 ubiquitin-protein ligase rfwd3.S (rfwd3.S) (Xenopus laevis (African clawed frog)).